We begin with the raw amino-acid sequence, 36 residues long: Photosystem II reaction center protein M (36 aa).

Residues 5-25 traverse the membrane as a helical segment; the sequence is ILGVIAVALFILIPTSFLLIL.

This sequence belongs to the PsbM family. PSII is composed of 1 copy each of membrane proteins PsbA, PsbB, PsbC, PsbD, PsbE, PsbF, PsbH, PsbI, PsbJ, PsbK, PsbL, PsbM, PsbT, PsbY, PsbZ, Psb30/Ycf12, at least 3 peripheral proteins of the oxygen-evolving complex and a large number of cofactors. It forms dimeric complexes.

It localises to the plastid. The protein resides in the chloroplast thylakoid membrane. One of the components of the core complex of photosystem II (PSII). PSII is a light-driven water:plastoquinone oxidoreductase that uses light energy to abstract electrons from H(2)O, generating O(2) and a proton gradient subsequently used for ATP formation. It consists of a core antenna complex that captures photons, and an electron transfer chain that converts photonic excitation into a charge separation. This subunit is found at the monomer-monomer interface. The chain is Photosystem II reaction center protein M from Bigelowiella natans (Pedinomonas minutissima).